Consider the following 1040-residue polypeptide: uncharacterized protein (1040 aa).

The Helicase ATP-binding domain occupies 403–588 (RLEESSKKGG…YSLIKFLRIK (186 aa)). 416–423 (DDMGLGKT) contributes to the ATP binding site. Residues 746-798 (CSLCMDVVAELLIIVPCGHFLCRECLTHVITSSEDMAKQTSNENISPKCSVCE) form an RING-type zinc finger. A Helicase C-terminal domain is found at 866 to 1032 (KIEKALNAVK…ISRLNTKELS (167 aa)).

It belongs to the SNF2/RAD54 helicase family.

The protein localises to the nucleus. This is an uncharacterized protein from Schizosaccharomyces pombe (strain 972 / ATCC 24843) (Fission yeast).